We begin with the raw amino-acid sequence, 157 residues long: 6,7-dimethyl-8-ribityllumazine synthase 1 (157 aa).

5-amino-6-(D-ribitylamino)uracil is bound by residues Phe22, 53–55, and 82–84; these read ALE and TVI. Position 87 to 88 (87 to 88) interacts with (2S)-2-hydroxy-3-oxobutyl phosphate; that stretch reads ET. Residue His90 is the Proton donor of the active site. Asn115 is a binding site for 5-amino-6-(D-ribitylamino)uracil. Arg129 is a binding site for (2S)-2-hydroxy-3-oxobutyl phosphate.

The protein belongs to the DMRL synthase family. As to quaternary structure, homopentamer.

The catalysed reaction is (2S)-2-hydroxy-3-oxobutyl phosphate + 5-amino-6-(D-ribitylamino)uracil = 6,7-dimethyl-8-(1-D-ribityl)lumazine + phosphate + 2 H2O + H(+). It functions in the pathway cofactor biosynthesis; riboflavin biosynthesis; riboflavin from 2-hydroxy-3-oxobutyl phosphate and 5-amino-6-(D-ribitylamino)uracil: step 1/2. In terms of biological role, catalyzes the formation of 6,7-dimethyl-8-ribityllumazine by condensation of 5-amino-6-(D-ribitylamino)uracil with 3,4-dihydroxy-2-butanone 4-phosphate. This is the penultimate step in the biosynthesis of riboflavin. The polypeptide is 6,7-dimethyl-8-ribityllumazine synthase 1 (ribH1) (Brucella melitensis biotype 1 (strain ATCC 23456 / CCUG 17765 / NCTC 10094 / 16M)).